The chain runs to 179 residues: Inner membrane-spanning protein YciB (179 aa).

5 helical membrane passes run 22 to 42, 50 to 70, 76 to 96, 121 to 141, and 149 to 169; these read IYAA…YSWV, MALI…FFHN, WKVT…QWVM, LAWA…AFWL, and FKVF…GVYI.

This sequence belongs to the YciB family.

The protein resides in the cell inner membrane. In terms of biological role, plays a role in cell envelope biogenesis, maintenance of cell envelope integrity and membrane homeostasis. This is Inner membrane-spanning protein YciB from Citrobacter koseri (strain ATCC BAA-895 / CDC 4225-83 / SGSC4696).